The chain runs to 760 residues: Formin-like protein 8 (760 aa).

Residues 1-29 (MAAMFNHPWPNLTLIYFFFIVVLPFQSLS) form the signal peptide. A compositionally biased stretch (pro residues) spans 52–63 (PLLPPSSNPSPP). Residues 52-71 (PLLPPSSNPSPPSNNSSSSD) are disordered. Residues 78–98 (AVLITAASTLLVAGVFFFCLQ) form a helical membrane-spanning segment. Positions 204–313 (TEIPLLRGRS…VKLKPLHWDK (110 aa)) are disordered. Positions 253–274 (TPSPPPPIKKGSSPSPPPPPPV) are enriched in pro residues. The region spanning 296-732 (SGGETSKQVK…GSPISPSSQR (437 aa)) is the FH2 domain.

This sequence belongs to the formin-like family. Class-I subfamily. Interacts with profilin.

The protein resides in the cell membrane. Might be involved in the organization and polarity of the actin cytoskeleton. Interacts with the barbed end of actin filaments and nucleates actin-filament polymerization in vitro. The protein is Formin-like protein 8 (FH8) of Arabidopsis thaliana (Mouse-ear cress).